The primary structure comprises 271 residues: Tryptophan synthase alpha chain (271 aa).

Catalysis depends on proton acceptor residues E49 and D60.

This sequence belongs to the TrpA family. As to quaternary structure, tetramer of two alpha and two beta chains.

It catalyses the reaction (1S,2R)-1-C-(indol-3-yl)glycerol 3-phosphate + L-serine = D-glyceraldehyde 3-phosphate + L-tryptophan + H2O. Its pathway is amino-acid biosynthesis; L-tryptophan biosynthesis; L-tryptophan from chorismate: step 5/5. Functionally, the alpha subunit is responsible for the aldol cleavage of indoleglycerol phosphate to indole and glyceraldehyde 3-phosphate. This chain is Tryptophan synthase alpha chain, found in Azoarcus sp. (strain BH72).